The following is a 248-amino-acid chain: Protein PARTING DANCERS homolog (248 aa).

Positions 1–10 (MERSTHSTGW) are enriched in polar residues. Residues 1–25 (MERSTHSTGWTCLPPPPPEPAAPGR) are disordered.

The protein belongs to the ERCC1/RAD10/SWI10 family. Interacts with SHOC1 (via C-terminus). Interacts with HEI10. In terms of tissue distribution, highly expressed in anthers and pistil during meiosis. Expressed in pollen mother cells (PMCs) during meiosis. Expressed at low levels in roots, shoots, leaves, flowers, and glumes.

The protein resides in the chromosome. It is found in the nucleus. The protein localises to the cytoplasm. Its subcellular location is the cell membrane. In terms of biological role, essential for normal crossover (CO) formation during meiosis. Essential component for the formation of class I meiotic COs. Interacts with SHOC1, another meiotic component, to regulate CO formation, possibly by stabilizing the recombination intermediates during meiosis. PTD and SHOC1 may form transient heterotrimeric or heterotetrameric complexes with HEI10 and/or ZIP4 to promote class I COs formation. Does not seem to be involved in early meiotic recombination steps involving double-strand break (DSB) formation, processing, and single-strand invasion. Does not seem to be involved in homologous pairing or synaptonemal complex (SC) assembly. The protein is Protein PARTING DANCERS homolog of Oryza sativa subsp. japonica (Rice).